We begin with the raw amino-acid sequence, 177 residues long: Protein C (177 aa).

Residues 1 to 10 are compositionally biased toward polar residues; that stretch reads MSTKAWNASR. The tract at residues 1 to 38 is disordered; it reads MSTKAWNASRLSGPDPSTPWSLRKPLQHGSRPPKGKRL.

This sequence belongs to the morbillivirus protein C family.

The polypeptide is Protein C (P/V/C) (Rinderpest virus (strain RBOK) (RDV)).